The primary structure comprises 61 residues: uncharacterized protein (61 aa).

Residues 24 to 60 (WMRYESERDEKLRMLERMRDELEAELEEIKREIERLR) adopt a coiled-coil conformation.

This is an uncharacterized protein from Archaeoglobus fulgidus (strain ATCC 49558 / DSM 4304 / JCM 9628 / NBRC 100126 / VC-16).